The following is a 428-amino-acid chain: MSNIVIVGAQWGDEGKGKIADTLAEKADLVVRYQGGNNAGHTLVVNGKKTFLHLIPSGVLRQHTKCVIGHGVVLDPVALDEEITRLQAKGIAISAENLFVSESCTIITSYHKLLDAVRESNTSEKIGTTGKGIGPAYEDKVSRKGIKFKHLFDKDLLRSRLAISLAEKETLFRDLYKVEYPTLEQEFDKLFALGQKLKQYAADTFSIIDQAIAAGKNVVYEGAQGVLLDVDYGTYPFVTSSNTSVAGVYSGATTAGHGLDHVIGITKAYTTRVGEGPFPTELFDDVGKFIQHKGGEIGVTTGRIRRCGWLDLPLLKYSAKCSNLTSIALTKVDVLSDMDTLKVCIGYKYEGKEIYCAYPGIDLYKVEPILVEMEPFSIDETVTKDNMPAALKTYLKTIENHVGIPISSLAYGPSREQILFFEDYFKKG.

Residues 12–18 and 40–42 each bind GTP; these read GDEGKGK and GHT. Aspartate 13 functions as the Proton acceptor in the catalytic mechanism. Aspartate 13 and glycine 40 together coordinate Mg(2+). IMP is bound by residues 13-16, 38-41, threonine 129, arginine 143, glutamine 224, threonine 239, and arginine 303; these read DEGK and NAGH. Residue histidine 41 is the Proton donor of the active site. 299–305 contributes to the substrate binding site; sequence VTTGRIR. GTP is bound by residues arginine 305, 331 to 333, and 410 to 412; these read KVD and AYG.

Belongs to the adenylosuccinate synthetase family. Homodimer. It depends on Mg(2+) as a cofactor.

Its subcellular location is the cytoplasm. The enzyme catalyses IMP + L-aspartate + GTP = N(6)-(1,2-dicarboxyethyl)-AMP + GDP + phosphate + 2 H(+). It functions in the pathway purine metabolism; AMP biosynthesis via de novo pathway; AMP from IMP: step 1/2. Its function is as follows. Plays an important role in the de novo pathway of purine nucleotide biosynthesis. Catalyzes the first committed step in the biosynthesis of AMP from IMP. This Francisella tularensis subsp. tularensis (strain FSC 198) protein is Adenylosuccinate synthetase.